The following is a 256-amino-acid chain: Ubiquinone/menaquinone biosynthesis C-methyltransferase UbiE (256 aa).

Over residues 1–12 (MNDQRKGDHAEP) the composition is skewed to basic and acidic residues. Residues 1-23 (MNDQRKGDHAEPTTHFGYQDVPE) form a disordered region. S-adenosyl-L-methionine contacts are provided by residues threonine 79, aspartate 100, and 128-129 (DA).

This sequence belongs to the class I-like SAM-binding methyltransferase superfamily. MenG/UbiE family.

The enzyme catalyses a 2-demethylmenaquinol + S-adenosyl-L-methionine = a menaquinol + S-adenosyl-L-homocysteine + H(+). The catalysed reaction is a 2-methoxy-6-(all-trans-polyprenyl)benzene-1,4-diol + S-adenosyl-L-methionine = a 5-methoxy-2-methyl-3-(all-trans-polyprenyl)benzene-1,4-diol + S-adenosyl-L-homocysteine + H(+). Its pathway is quinol/quinone metabolism; menaquinone biosynthesis; menaquinol from 1,4-dihydroxy-2-naphthoate: step 2/2. It participates in cofactor biosynthesis; ubiquinone biosynthesis. In terms of biological role, methyltransferase required for the conversion of demethylmenaquinol (DMKH2) to menaquinol (MKH2) and the conversion of 2-polyprenyl-6-methoxy-1,4-benzoquinol (DDMQH2) to 2-polyprenyl-3-methyl-6-methoxy-1,4-benzoquinol (DMQH2). The sequence is that of Ubiquinone/menaquinone biosynthesis C-methyltransferase UbiE from Pseudomonas putida (strain ATCC 700007 / DSM 6899 / JCM 31910 / BCRC 17059 / LMG 24140 / F1).